We begin with the raw amino-acid sequence, 113 residues long: Small ribosomal subunit protein bS18 (113 aa).

Residues 1-41 (MSEEKIVNTEAAPEAVAERPARAERSERPERPAKGPFGKKR) are disordered. Residues 16–33 (VAERPARAERSERPERPA) are compositionally biased toward basic and acidic residues.

The protein belongs to the bacterial ribosomal protein bS18 family. Part of the 30S ribosomal subunit. Forms a tight heterodimer with protein bS6.

In terms of biological role, binds as a heterodimer with protein bS6 to the central domain of the 16S rRNA, where it helps stabilize the platform of the 30S subunit. This chain is Small ribosomal subunit protein bS18, found in Elusimicrobium minutum (strain Pei191).